The following is a 126-amino-acid chain: MGIQGGSVLFGLLLALAVFCHSGHSLQCYNCPNPTTNCKTAINCSSGFDTCLIARAGLQVYNQCWKFANCNFNDISTLLKESELQYFCCKEDLCNEQLENGGTSLSEKTVLLLVTPLLAAAWCLHP.

Positions 1–25 are cleaved as a signal peptide; the sequence is MGIQGGSVLFGLLLALAVFCHSGHS. The region spanning 26-106 is the UPAR/Ly6 domain; that stretch reads LQCYNCPNPT…QLENGGTSLS (81 aa). 5 cysteine pairs are disulfide-bonded: Cys28-Cys51, Cys31-Cys38, Cys44-Cys64, Cys70-Cys88, and Cys89-Cys94. Asn43 carries an N-linked (GlcNAc...) asparagine glycan. Asn100 carries the GPI-anchor amidated asparagine lipid modification. Positions 101–126 are cleaved as a propeptide — removed in mature form; that stretch reads GGTSLSEKTVLLLVTPLLAAAWCLHP.

Interacts with T-cell surface antigen CD2. Post-translationally, N- and O-glycosylated.

The protein resides in the cell membrane. It is found in the secreted. Potent inhibitor of the complement membrane attack complex (MAC) action, which protects self-cells from damage during complement activation. Acts by binding to the beta-haipins of C8 (C8A and C8B) components of the assembling MAC, forming an intermolecular beta-sheet that prevents incorporation of the multiple copies of C9 required for complete formation of the osmolytic pore. This Papio sp. (Baboon) protein is CD59 glycoprotein.